The chain runs to 337 residues: 1-aminocyclopropane-1-carboxylate deaminase (337 aa).

Lysine 50 is subject to N6-(pyridoxal phosphate)lysine. Serine 77 functions as the Nucleophile in the catalytic mechanism.

Belongs to the ACC deaminase/D-cysteine desulfhydrase family. Homotrimer. Pyridoxal 5'-phosphate is required as a cofactor.

It carries out the reaction 1-aminocyclopropane-1-carboxylate + H2O = 2-oxobutanoate + NH4(+). Catalyzes a cyclopropane ring-opening reaction, the irreversible conversion of 1-aminocyclopropane-1-carboxylate (ACC) to ammonia and alpha-ketobutyrate. Allows growth on ACC as a nitrogen source. The polypeptide is 1-aminocyclopropane-1-carboxylate deaminase (Bradyrhizobium diazoefficiens (strain JCM 10833 / BCRC 13528 / IAM 13628 / NBRC 14792 / USDA 110)).